The chain runs to 221 residues: Protein-disulfide oxidoreductase DsbI (221 aa).

A helical membrane pass occupies residues Phe-27–Phe-47. A disulfide bridge links Cys-56 with Cys-59. The next 2 helical transmembrane spans lie at Phe-64 to Ile-84 and Leu-85 to Val-105. A disulfide bridge links Cys-128 with Cys-154. A helical membrane pass occupies residues Leu-189–Val-209.

Belongs to the DsbB family. DsbI subfamily. As to quaternary structure, interacts with DsbL.

The protein localises to the cell inner membrane. Functionally, required for disulfide bond formation in some proteins. Part of a redox system composed of DsbI and DsbL that mediates formation of an essential disulfide bond in AssT. In Lelliottia amnigena (Enterobacter amnigenus), this protein is Protein-disulfide oxidoreductase DsbI.